A 323-amino-acid chain; its full sequence is tRNA U34 carboxymethyltransferase (323 aa).

Carboxy-S-adenosyl-L-methionine-binding positions include Lys-91, Trp-105, Lys-110, Gly-130, 152–154 (DPS), 181–182 (IE), Met-196, Tyr-200, and Arg-315.

The protein belongs to the class I-like SAM-binding methyltransferase superfamily. CmoB family. In terms of assembly, homotetramer.

The catalysed reaction is carboxy-S-adenosyl-L-methionine + 5-hydroxyuridine(34) in tRNA = 5-carboxymethoxyuridine(34) in tRNA + S-adenosyl-L-homocysteine + H(+). Functionally, catalyzes carboxymethyl transfer from carboxy-S-adenosyl-L-methionine (Cx-SAM) to 5-hydroxyuridine (ho5U) to form 5-carboxymethoxyuridine (cmo5U) at position 34 in tRNAs. This chain is tRNA U34 carboxymethyltransferase, found in Vibrio atlanticus (strain LGP32) (Vibrio splendidus (strain Mel32)).